Consider the following 236-residue polypeptide: Ubiquinone biosynthesis O-methyltransferase (236 aa).

S-adenosyl-L-methionine contacts are provided by Arg36, Gly56, Asp77, and Met125.

The protein belongs to the methyltransferase superfamily. UbiG/COQ3 family.

The catalysed reaction is a 3-demethylubiquinol + S-adenosyl-L-methionine = a ubiquinol + S-adenosyl-L-homocysteine + H(+). The enzyme catalyses a 3-(all-trans-polyprenyl)benzene-1,2-diol + S-adenosyl-L-methionine = a 2-methoxy-6-(all-trans-polyprenyl)phenol + S-adenosyl-L-homocysteine + H(+). It functions in the pathway cofactor biosynthesis; ubiquinone biosynthesis. Functionally, O-methyltransferase that catalyzes the 2 O-methylation steps in the ubiquinone biosynthetic pathway. This is Ubiquinone biosynthesis O-methyltransferase from Haemophilus ducreyi (strain 35000HP / ATCC 700724).